We begin with the raw amino-acid sequence, 314 residues long: Replication initiation protein (314 aa).

Residues 1 to 10 are compositionally biased toward polar residues; that stretch reads MSKNNHANHS. The disordered stretch occupies residues 1 to 25; that stretch reads MSKNNHANHSNHLENHDLDNFSKTG. Over residues 11 to 20 the composition is skewed to basic and acidic residues; it reads NHLENHDLDN.

Belongs to the plasmid replication initiation factor family.

This protein is probably a specific topoisomerase involved in initiating replication. This protein is specifically required and may be rate-limiting for replication of the plasmid in vivo. This is Replication initiation protein (repN) from Staphylococcus aureus.